A 678-amino-acid chain; its full sequence is DNA ligase (678 aa).

NAD(+) is bound by residues 47 to 51 (DSDYD), 96 to 97 (SL), and E122. The active-site N6-AMP-lysine intermediate is the K124. Residues R145, E182, K300, and K324 each contribute to the NAD(+) site. Positions 418, 421, 436, and 442 each coordinate Zn(2+). The BRCT domain maps to 602–678 (AYNESFTGKT…ILEDNLKDLL (77 aa)).

It belongs to the NAD-dependent DNA ligase family. LigA subfamily. Mg(2+) is required as a cofactor. Requires Mn(2+) as cofactor.

It carries out the reaction NAD(+) + (deoxyribonucleotide)n-3'-hydroxyl + 5'-phospho-(deoxyribonucleotide)m = (deoxyribonucleotide)n+m + AMP + beta-nicotinamide D-nucleotide.. In terms of biological role, DNA ligase that catalyzes the formation of phosphodiester linkages between 5'-phosphoryl and 3'-hydroxyl groups in double-stranded DNA using NAD as a coenzyme and as the energy source for the reaction. It is essential for DNA replication and repair of damaged DNA. This is DNA ligase from Francisella tularensis subsp. novicida (strain U112).